The following is a 378-amino-acid chain: TelA-like protein SAB1262 (378 aa).

It belongs to the TelA family.

In Staphylococcus aureus (strain bovine RF122 / ET3-1), this protein is TelA-like protein SAB1262.